Consider the following 299-residue polypeptide: tRNA dimethylallyltransferase (299 aa).

Residue 10 to 17 (GPTASGKS) coordinates ATP. Residue 12-17 (TASGKS) coordinates substrate.

It belongs to the IPP transferase family. Monomer. Mg(2+) is required as a cofactor.

It carries out the reaction adenosine(37) in tRNA + dimethylallyl diphosphate = N(6)-dimethylallyladenosine(37) in tRNA + diphosphate. In terms of biological role, catalyzes the transfer of a dimethylallyl group onto the adenine at position 37 in tRNAs that read codons beginning with uridine, leading to the formation of N6-(dimethylallyl)adenosine (i(6)A). The protein is tRNA dimethylallyltransferase of Malacoplasma penetrans (strain HF-2) (Mycoplasma penetrans).